A 435-amino-acid chain; its full sequence is Diguanylate cyclase TpbB (435 aa).

Over 1–22 (MNRRRRYTGSNPSLRRVLYRAH) the chain is Cytoplasmic. A helical transmembrane segment spans residues 23-43 (LGVALVAVFTAGLAVTLVGLL). Topologically, residues 44-154 (TLRAYADPNQ…VKGSGGSLLR (111 aa)) are periplasmic. A helical membrane pass occupies residues 155–175 (FLLTGFAGMVLCLLLTALGAF). Over 176–435 (YLSRRLVRGI…DSATPEAPPK (260 aa)) the chain is Cytoplasmic. An HAMP domain is found at 183–236 (RGIVGPLDQLAKVAHTVRRERDFEKRVPEAGIAELSQLGEDFNALLDELESWQA). Residues 279 to 415 (EQLAVLFIDS…GSRRLAELND (137 aa)) enclose the GGDEF domain. Ser-288 and Asp-330 together coordinate Mg(2+). Asp-330 serves as the catalytic Proton acceptor. Basic and acidic residues predominate over residues 413-426 (LNDPRILQEEKEID). Positions 413–435 (LNDPRILQEEKEIDSATPEAPPK) are disordered.

In terms of assembly, homodimer. Interacts with YfiR. Mg(2+) serves as cofactor. Post-translationally, phosphorylated at both Tyr residues and Ser/Thr residues. Dephosphorylated and inactivated by TpbA.

The protein localises to the cell inner membrane. It catalyses the reaction 2 GTP = 3',3'-c-di-GMP + 2 diphosphate. It functions in the pathway purine metabolism; 3',5'-cyclic di-GMP biosynthesis. Activity is tightly controlled by YfiR, a small periplasmic protein, and the OmpA/Pal-like outer-membrane lipoprotein YfiB. Diguanylate cyclase activity is inhibited by the specific interaction of YfiR with the TpbB periplasmic domain and is activated by YfiB, which releases the YfiR-mediated repression through sequestration of YfiR to the outer membrane. Release of repression leads to a conformational shift in TpbB/YfiN that propagates through the PAS and transmembrane domains to switch the cytoplasmic HAMP domain from an inactive to an active conformation and activate the C-terminal catalytic GGDEF domain. Thus, TpbB/YfiN appears to function by switching between discrete inactive and active functional states depending on the presence or absence of bound YfiR. Activity is also controlled by dephosphorylation of the periplasmic domain by the tyrosine phosphatase TpbA. These two mechanisms of regulation could in principle work in parallel or as part of the same regulatory pathway. Does not undergo product feedback inhibition. Its function is as follows. Catalyzes the synthesis of cyclic-di-GMP (c-di-GMP) via the condensation of 2 GTP molecules. In terms of biological role, part of the YfiB-TpbB-YfiR (or yfiBNR) system, encoding a tripartite signaling module that modulates intracellular c-di-GMP levels. The system is a key regulator of the small colony variant (SCV) phenotype, and plays an important role in biofilm formation and in vivo persistence. The c-di-GMP produced by TpbB/YfiN stimulates the production of the Pel and Psl exopolysaccharides, which promotes surface attachment, generates an SCV phenotype and confers resistance against phagocytosis. This is Diguanylate cyclase TpbB from Pseudomonas aeruginosa (strain ATCC 15692 / DSM 22644 / CIP 104116 / JCM 14847 / LMG 12228 / 1C / PRS 101 / PAO1).